Consider the following 323-residue polypeptide: Mas-related G-protein coupled receptor member X1 (323 aa).

The Extracellular portion of the chain corresponds to 1 to 30 (MDPTISSLSTESTTLNKTGHPSCRPILTLS). An N-linked (GlcNAc...) asparagine glycan is attached at Asn16. Residues 31-51 (FLVPIITLLGLAGNTIVLWLL) traverse the membrane as a helical segment. Over 52 to 59 (GFRMRRKA) the chain is Cytoplasmic. Residues 60–80 (ISVYVLNLSLADSFFLCCHFI) traverse the membrane as a helical segment. The Extracellular segment spans residues 81-100 (DSLMRIMNFYGIYAHKLSKE). The helical transmembrane segment at 101-121 (ILGNAAIIPYISGLSILSAIS) threads the bilayer. The Cytoplasmic portion of the chain corresponds to 122 to 143 (TERCLSVLWPIWYHCHRPRNMS). Residues 144–164 (AIICVLIWVLSFLMGILDWFF) traverse the membrane as a helical segment. The Extracellular portion of the chain corresponds to 165–180 (SGFLGETHHHLWKNVD). Residues 181 to 201 (FIVTAFLIFLFMLLFGSSLAL) traverse the membrane as a helical segment. Over 202–226 (LVRILCGSRRKPLSRLYVTISLTVM) the chain is Cytoplasmic. The helical transmembrane segment at 227–247 (VYLICGLPLGLYLFLLYWFGI) threads the bilayer. Over 248–258 (HLHYPFCHIYQ) the chain is Extracellular. A helical membrane pass occupies residues 259 to 279 (VTVLLSCVNSSANPIIYFLVG). Topologically, residues 280–323 (SFRHRKKHRSLKMVLKRALEETPEEDEYTDSHVQKPTEISERRC) are cytoplasmic.

This sequence belongs to the G-protein coupled receptor 1 family. Mas subfamily. In terms of tissue distribution, uniquely localized in a subset of small dorsal root and trigeminal sensory neurons. Associated preferentially with IB4 class of small-diameter somatosensory afferents (also known as nociceptors).

It is found in the cell membrane. Functionally, orphan receptor activated by neuropeptides terminating in Arg-Phe or Arg-Phe-amide. Mediates its action by association with G proteins that activate a phosphatidylinositol-calcium second messenger system. Its effect is mediated by G(q) and G(11) proteins. May regulate the function of nociceptive neurons by modulation of pain perception. In Rattus norvegicus (Rat), this protein is Mas-related G-protein coupled receptor member X1 (Mrgprx1).